A 565-amino-acid polypeptide reads, in one-letter code: Perivitellin-2 67 kDa subunit (565 aa).

Positions 1–26 are cleaved as a signal peptide; sequence MSQLRWWVVSQLLLLIVVCILDHSEG. Positions 27 to 340 constitute an MACPF domain; it reads ARVCPKIVPG…AKVANLDRLT (314 aa).

In terms of assembly, perivitellin-2 is a heterooctamer of 4 identical 98 kDa heterodimers, each composed of one 31 kDa and one 67 kDa subunits. The 98 kDa heterodimer subunits are held together by disulfide bridges while the heterodimers are assembled into the native perivitellin-2 octamer by non-covalent forces. Glycosylated. Contains four O-linked and one N-linked oligosaccharide bonds. The protein contains 2.5% of carbohydrates (high levels of mannose, galactose, and NAcGlucosamine, and small amounts of NacGalactosamine). Post-translationally, PV2 is a very high density lipoprotein (VHDL). It contains 3.75% of lipids. The major lipid classes are free sterols and phospholipids and also have significant quantities of energy-providing triacylglycerides and free fatty acids. Produced by albumen secretory cells. Found in developing eggs.

It localises to the secreted. It is found in the target cell membrane. In terms of biological role, the egg defensive protein perivitellin-2 is a pore-forming two-subunit glycoprotein that affects both the nervous and digestive systems of mammals. In addition, it is a source of both structural and energetic molecules during embryonic development. The tachylectin subunit (31 kDa) binds target membranes while the MACPF subunit (67 kDa) disrupts lipid bilayers forming large pores altering the plasma membrance conductance. Both in vivo and in vitro, the protein shows wide pH range stability and is resistant to enzymatic proteolysis from gastrointestinal environments. It specifically binds mature enterocytes but does not cause cell disruption on caco-2 (human colorectal adenocarcinoma cells) or rat intestinal cells. After oral administration to mice, it binds enterocytes and induces large dose-dependent morphological changes on their small intestine mucosa, reducing the absorptive surface. Additionally, it is detected in the Peyer's patches where it activates lymphoid follicles and triggers apoptosis. The toxin can also traverse the intestinal barrier and induce oral adaptive immunity with evidence of circulating antibody response. The toxin also shows hemagglutination properties thanks to the tachylectin subunit, but does not show hemolytic activity. In addition to enterotoxin activity, the toxin also acts as a neurotoxin, since an intraperitoneal injection induces paralysis of the mice rear limbs, followed by death. The polypeptide is Perivitellin-2 67 kDa subunit (Pomacea canaliculata (Golden apple snail)).